Consider the following 404-residue polypeptide: Homoserine O-succinyltransferase (404 aa).

Residues 1–25 (MTDIQADPAVTAADAAQADTSSPTA) are compositionally biased toward low complexity. The disordered stretch occupies residues 1 to 30 (MTDIQADPAVTAADAAQADTSSPTAHQGKP). The 310-residue stretch at 75-384 (NAVLICHALN…HGHDAFLLED (310 aa)) folds into the AB hydrolase-1 domain. Residue serine 179 is the Nucleophile of the active site. Arginine 249 is a substrate binding site. Catalysis depends on residues aspartate 344 and histidine 377. Residue aspartate 378 participates in substrate binding.

It belongs to the AB hydrolase superfamily. MetX family. As to quaternary structure, homodimer.

Its subcellular location is the cytoplasm. The catalysed reaction is L-homoserine + succinyl-CoA = O-succinyl-L-homoserine + CoA. The protein operates within amino-acid biosynthesis; L-methionine biosynthesis via de novo pathway; O-succinyl-L-homoserine from L-homoserine: step 1/1. Functionally, transfers a succinyl group from succinyl-CoA to L-homoserine, forming succinyl-L-homoserine. The chain is Homoserine O-succinyltransferase from Ralstonia pickettii (strain 12J).